Consider the following 617-residue polypeptide: Chaperone protein HscA homolog (617 aa).

The protein belongs to the heat shock protein 70 family.

In terms of biological role, chaperone involved in the maturation of iron-sulfur cluster-containing proteins. Has a low intrinsic ATPase activity which is markedly stimulated by HscB. The polypeptide is Chaperone protein HscA homolog (Aliivibrio salmonicida (strain LFI1238) (Vibrio salmonicida (strain LFI1238))).